The sequence spans 324 residues: Acetyl-coenzyme A carboxylase carboxyl transferase subunit alpha (324 aa).

The CoA carboxyltransferase C-terminal domain maps to 44–298 (RFQNQLVKLQ…KKELTEQLDS (255 aa)).

Belongs to the AccA family. In terms of assembly, acetyl-CoA carboxylase is a heterohexamer composed of biotin carboxyl carrier protein (accB), biotin carboxylase (accC) and two subunits each of ACCase subunit alpha (accA) and ACCase subunit beta (accD).

The protein resides in the plastid. The protein localises to the chloroplast. It catalyses the reaction N(6)-carboxybiotinyl-L-lysyl-[protein] + acetyl-CoA = N(6)-biotinyl-L-lysyl-[protein] + malonyl-CoA. Its pathway is lipid metabolism; malonyl-CoA biosynthesis; malonyl-CoA from acetyl-CoA: step 1/1. Functionally, component of the acetyl coenzyme A carboxylase (ACC) complex. First, biotin carboxylase catalyzes the carboxylation of biotin on its carrier protein (BCCP) and then the CO(2) group is transferred by the carboxyltransferase to acetyl-CoA to form malonyl-CoA. This Pyropia yezoensis (Susabi-nori) protein is Acetyl-coenzyme A carboxylase carboxyl transferase subunit alpha.